The sequence spans 469 residues: Aryl-phospho-beta-D-glucosidase BglH (469 aa).

Glu-175 (proton donor) is an active-site residue. The active-site Nucleophile is Glu-368.

The protein belongs to the glycosyl hydrolase 1 family.

The catalysed reaction is 6-phospho-beta-D-glucosyl-(1-&gt;4)-D-glucose + H2O = D-glucose 6-phosphate + D-glucose. Catalyzes the hydrolysis of aryl-phospho-beta-D-glucosides such as 4-methylumbelliferyl-phospho-beta-D-glucopyranoside (MUG-P), phosphoarbutin and phosphosalicin. Plays a major role in the utilization of arbutin or salicin as the sole carbon source. BglA and BglH are the major proteins contributing to hydrolysis of MUG-P by extracts of late-exponential-phase or stationary-phase B.subtilis cells. The sequence is that of Aryl-phospho-beta-D-glucosidase BglH (bglH) from Bacillus subtilis (strain 168).